The primary structure comprises 113 residues: Small ribosomal subunit protein uS17 (113 aa).

This sequence belongs to the universal ribosomal protein uS17 family. Part of the 30S ribosomal subunit.

One of the primary rRNA binding proteins, it binds specifically to the 5'-end of 16S ribosomal RNA. In Pyrococcus abyssi (strain GE5 / Orsay), this protein is Small ribosomal subunit protein uS17.